A 405-amino-acid polypeptide reads, in one-letter code: Phosphatidylinositol 5-phosphate 4-kinase type-2 alpha (405 aa).

Ala2 is subject to N-acetylalanine. Thr3 is subject to Phosphothreonine. Ser14 is modified (phosphoserine). In terms of domain architecture, PIPK spans 33–405 (ASDPLLSVLM…RFLDFIGHIL (373 aa)). The required for interaction with PIP5K1A stretch occupies residues 59-65 (VMLMPDD). N6-acetyllysine is present on residues Lys89 and Lys145. Residues 288–328 (QEEVECEENDGEEEGESDSTHPIGTPPDSPGNTLNSSPPLA) are disordered. Residues 289–304 (EEVECEENDGEEEGES) are compositionally biased toward acidic residues.

As to quaternary structure, homodimer. Interacts with PIP4K2B; the interaction may regulate localization to the nucleus. Probably interacts with PIP5K1A; the interaction inhibits PIP5K1A kinase activity. Phosphorylated in tyrosines. Phosphorylation is induced by light and increases kinase activity. Detected in rod photoreceptor cells.

Its subcellular location is the cell membrane. The protein localises to the nucleus. It localises to the lysosome. The protein resides in the cytoplasm. It is found in the photoreceptor inner segment. Its subcellular location is the cell projection. The protein localises to the cilium. It localises to the photoreceptor outer segment. The enzyme catalyses a 1,2-diacyl-sn-glycero-3-phospho-(1D-myo-inositol-5-phosphate) + ATP = a 1,2-diacyl-sn-glycero-3-phospho-(1D-myo-inositol-4,5-bisphosphate) + ADP + H(+). The catalysed reaction is 1,2-dihexadecanoyl-sn-glycero-3-phospho-(1D-myo-inositol-5-phosphate) + ATP = 1,2-dihexadecanoyl-sn-glycero-3-phospho-(1D-myo-inositol-4,5-bisphosphate) + ADP + H(+). It carries out the reaction 1,2-dihexadecanoyl-sn-glycero-3-phospho-(1D-myo-inositol-5-phosphate) + GTP = 1,2-dihexadecanoyl-sn-glycero-3-phospho-(1D-myo-inositol-4,5-bisphosphate) + GDP + H(+). Its activity is regulated as follows. In rod outer segments, activated by light. Functionally, catalyzes the phosphorylation of phosphatidylinositol 5-phosphate (PtdIns5P) on the fourth hydroxyl of the myo-inositol ring, to form phosphatidylinositol 4,5-bisphosphate (PtdIns(4,5)P2). Has both ATP- and GTP-dependent kinase activities. May exert its function by regulating the levels of PtdIns5P, which functions in the cytosol by increasing AKT activity and in the nucleus signals through ING2. May regulate the pool of cytosolic PtdIns5P in response to the activation of tyrosine phosphorylation. Required for lysosome-peroxisome membrane contacts and intracellular cholesterol transport through modulating peroxisomal PtdIns(4,5)P2 level. In collaboration with PIP4K2B, has a role in mediating autophagy in times of nutrient stress. Required for autophagosome-lysosome fusion and the regulation of cellular lipid metabolism. Negatively regulates insulin signaling through a catalytic-independent mechanism. PIP4Ks interact with PIP5Ks and suppress PIP5K-mediated PtdIns(4,5)P2 synthesis and insulin-dependent conversion to PtdIns(3,4,5)P3. May be involved in thrombopoiesis, and the terminal maturation of megakaryocytes and regulation of their size. This is Phosphatidylinositol 5-phosphate 4-kinase type-2 alpha from Mus musculus (Mouse).